The primary structure comprises 233 residues: 7-cyano-7-deazaguanine synthase (233 aa).

17–27 (LSGGLDSMVCA) provides a ligand contact to ATP. The Zn(2+) site is built by Cys-196, Cys-206, Cys-209, and Cys-212.

The protein belongs to the QueC family. Zn(2+) is required as a cofactor.

It catalyses the reaction 7-carboxy-7-deazaguanine + NH4(+) + ATP = 7-cyano-7-deazaguanine + ADP + phosphate + H2O + H(+). Its pathway is purine metabolism; 7-cyano-7-deazaguanine biosynthesis. Catalyzes the ATP-dependent conversion of 7-carboxy-7-deazaguanine (CDG) to 7-cyano-7-deazaguanine (preQ(0)). This is 7-cyano-7-deazaguanine synthase from Novosphingobium aromaticivorans (strain ATCC 700278 / DSM 12444 / CCUG 56034 / CIP 105152 / NBRC 16084 / F199).